Consider the following 735-residue polypeptide: Alpha-adducin (735 aa).

N-acetylmethionine is present on Met1. The span at 1–11 shows a compositional bias: low complexity; it reads MNGDTRAAVVT. Residues 1-21 are disordered; the sequence is MNGDTRAAVVTSPPPTTAPHK. Ser12, Ser59, and Ser64 each carry phosphoserine. Thr331 bears the Phosphothreonine mark. Phosphoserine occurs at positions 334, 353, and 355. Residue Thr358 is modified to Phosphothreonine. A phosphoserine mark is found at Ser364, Ser366, Ser408, and Ser427. Disordered regions lie at residues 418–487 and 576–735; these read GHSF…AVPN and RREV…KSDS. A Phosphothreonine modification is found at Thr429. A phosphoserine mark is found at Ser431 and Ser436. Residues 440-455 show a composition bias toward basic and acidic residues; sequence QQREKTRWLHSGRGDD. At Thr445 the chain carries Phosphothreonine; by ROCK2. Ser464 and Ser465 each carry phosphoserine. Thr480 carries the post-translational modification Phosphothreonine; by ROCK2. Ser481 carries the post-translational modification Phosphoserine; by PKA. Positions 576 to 601 are enriched in basic and acidic residues; it reads RREVERKQKGSEENLDETREQKEKSP. Ser586, Ser600, and Ser605 each carry phosphoserine. Thr610 carries the post-translational modification Phosphothreonine. Ser613 is subject to Phosphoserine. A Phosphothreonine modification is found at Thr614. Positions 698–712 are enriched in low complexity; the sequence is GSPMDPGSDGSPGKS. Residues Ser705, Ser708, and Ser712 each carry the phosphoserine modification. A compositionally biased stretch (basic residues) spans 713–735; that stretch reads PSKKKKKFRTPSFLKKSKKKSDS. Ser714 bears the Phosphoserine; by PKC mark. An interaction with calmodulin region spans residues 715-732; the sequence is KKKKKFRTPSFLKKSKKK. Position 724 is a phosphoserine; by PKA and PKC (Ser724).

This sequence belongs to the aldolase class II family. Adducin subfamily. Heterodimer of an alpha and a beta subunit or an alpha and a gamma subunit.

The protein localises to the cytoplasm. It is found in the cytoskeleton. Its subcellular location is the cell membrane. Functionally, membrane-cytoskeleton-associated protein that promotes the assembly of the spectrin-actin network. Binds to calmodulin. This Mus musculus (Mouse) protein is Alpha-adducin (Add1).